The sequence spans 383 residues: Probable sphingolipid long chain base-responsive protein pil2 (383 aa).

Phosphoserine is present on Ser162. Disordered regions lie at residues 292-336 (PRTD…EDYQ) and 356-383 (GEED…PIAA). Over residues 311-324 (TTSGTTHSYTSTGS) the composition is skewed to low complexity. 2 stretches are compositionally biased toward polar residues: residues 325-336 (KRYSQMGTEDYQ) and 368-383 (VAET…PIAA).

Post-translationally, phosphorylated by ksg1 and ppk21. Phosphorylation is regulated by sphingolipid long chain bases (LCBs).

In terms of biological role, negative regulator of cell wall integrity (CWI) in unstressed cells, probably by inhibiting protein kinase ksg1/ppk21 activity and regulating their downstream CWI pathways pck2-MAP kinase pathway and protein kinase gad8 pathway. Activity may be regulated by the transient increase of sphingolipid long chain bases (LCBs) during heat stress. This Schizosaccharomyces pombe (strain 972 / ATCC 24843) (Fission yeast) protein is Probable sphingolipid long chain base-responsive protein pil2 (pil2).